A 230-amino-acid polypeptide reads, in one-letter code: Ribonuclease 1 (230 aa).

An N-terminal signal peptide occupies residues 1 to 22; sequence MKILLASLCLISLLVILPSVFS. Glutamine 38 contributes to the RNA binding site. Cysteine 44 and cysteine 50 form a disulfide bridge. RNA-binding positions include histidine 65, phenylalanine 115, 118–119, and 122–123; these read HE and KH. The Proton donor role is filled by histidine 65. 3 disulfide bridges follow: cysteine 80–cysteine 126, cysteine 186–cysteine 221, and cysteine 202–cysteine 213. Glutamate 119 is an active-site residue. The active-site Proton acceptor is the histidine 123.

Belongs to the RNase T2 family.

The enzyme catalyses a ribonucleotidyl-ribonucleotide-RNA + H2O = a 3'-end 3'-phospho-ribonucleotide-RNA + a 5'-end dephospho-ribonucleoside-RNA + H(+). May remobilize phosphate, particularly when cells senesce or when phosphate becomes limiting. This chain is Ribonuclease 1 (RNS1), found in Arabidopsis thaliana (Mouse-ear cress).